Consider the following 376-residue polypeptide: UDP-N-acetylglucosamine 2-epimerase (376 aa).

Residues R10, K15, D95, E117, H213, Q271, F276, 290 to 292, E296, and R313 each bind substrate; that span reads SGG.

Belongs to the UDP-N-acetylglucosamine 2-epimerase family. Homodimer.

Its subcellular location is the cytoplasm. It carries out the reaction UDP-N-acetyl-alpha-D-glucosamine = UDP-N-acetyl-alpha-D-mannosamine. It participates in bacterial outer membrane biogenesis; enterobacterial common antigen biosynthesis. Functionally, catalyzes the reversible epimerization at C-2 of UDP-N-acetylglucosamine (UDP-GlcNAc) and thereby provides bacteria with UDP-N-acetylmannosamine (UDP-ManNAc), the activated donor of ManNAc residues. The sequence is that of UDP-N-acetylglucosamine 2-epimerase from Yersinia pestis.